The chain runs to 108 residues: Peptidyl-prolyl cis-trans isomerase FKBP1B (108 aa).

The PPIase FKBP-type domain maps to 20 to 108 (GQTCVVHYTG…IFGVELLNLE (89 aa)).

The protein belongs to the FKBP-type PPIase family. FKBP1 subfamily. In terms of assembly, identified in a complex composed of RYR2, FKBP1B, PKA catalytic subunit, PRKAR2A, AKAP6, and the protein phosphatases PP2A and PP1. Interacts directly with RYR2.

Its subcellular location is the cytoplasm. The protein resides in the sarcoplasmic reticulum. It carries out the reaction [protein]-peptidylproline (omega=180) = [protein]-peptidylproline (omega=0). Its activity is regulated as follows. Inhibited by both FK506 and rapamycin. In terms of biological role, has the potential to contribute to the immunosuppressive and toxic effects of FK506 and rapamycin. PPIases accelerate the folding of proteins. It catalyzes the cis-trans isomerization of proline imidic peptide bonds in oligopeptides. This is Peptidyl-prolyl cis-trans isomerase FKBP1B (FKBP1B) from Oryctolagus cuniculus (Rabbit).